The primary structure comprises 905 residues: Microtubule-associated protein 10 (905 aa).

7 disordered regions span residues 30–51, 199–235, 329–362, 434–458, 547–586, 721–772, and 786–855; these read AAAV…SSPR, TRTG…KPLG, APEE…AHEH, SPES…GGCE, SSAE…FDEP, RSFK…GSPV, and KSLE…SSYL. Over residues 34–43 the composition is skewed to acidic residues; that stretch reads EQEEEEEEKE. The segment covering 208-227 has biased composition (low complexity); the sequence is SPQTQQERQQLQQPASQPSP. A compositionally biased stretch (basic and acidic residues) spans 443–453; it reads CRSEAKKDKRS. Positions 567-579 are enriched in polar residues; sequence ASFTENSDTSRQI. A compositionally biased stretch (basic and acidic residues) spans 721-736; the sequence is RSFKAHDSSSRTENPK. Over residues 737–748 the composition is skewed to polar residues; that stretch reads HSQYTSKSSDTG. Residues 790 to 801 are compositionally biased toward low complexity; it reads EASSISASDLSS. Polar residues predominate over residues 830-855; that stretch reads SVKTRSSWKSLEKSQSPQTSQVSSYL.

Interacts (via middle region) with microtubules. In terms of tissue distribution, expressed in different cell lines (at protein level).

The protein resides in the cytoplasm. It localises to the cytoskeleton. The protein localises to the spindle pole. Its subcellular location is the microtubule organizing center. It is found in the centrosome. The protein resides in the midbody. Its function is as follows. Microtubule-associated protein (MAP) that plays a role in the regulation of cell division; promotes microtubule stability and participates in the organization of the spindle midzone and normal progress of cytokinesis. This Homo sapiens (Human) protein is Microtubule-associated protein 10 (MAP10).